The following is a 385-amino-acid chain: Interleukin-13 receptor subunit alpha-2 (385 aa).

A signal peptide spans 1–23 (MALMAVNTRCLCLFLLCTITGHS). The Extracellular portion of the chain corresponds to 24–336 (LEIKVNPPQD…WEGYTGPDSK (313 aa)). Fibronectin type-III domains are found at residues 30–130 (PPQD…ADEG), 133–221 (GTKI…PIRS), and 236–334 (PPEF…TGPD). A disulfide bridge connects residues Cys-61 and Cys-109. Asn-111 carries N-linked (GlcNAc...) asparagine glycosylation. A disulfide bridge connects residues Cys-141 and Cys-151. Asn-164 is a glycosylation site (N-linked (GlcNAc...) asparagine). An intrachain disulfide couples Cys-180 to Cys-193. N-linked (GlcNAc...) asparagine glycans are attached at residues Asn-211 and Asn-295. Residues Cys-265 and Cys-312 are joined by a disulfide bond. Residues 318 to 322 (WSEWS) carry the WSXWS motif motif. Residues 337–357 (IVFIVPVCLFFIFLLLLLCLI) form a helical membrane-spanning segment. At 358 to 385 (VEKEDPEPTLSLHVDLNKEMYAYEETLC) the chain is on the cytoplasmic side.

This sequence belongs to the type I cytokine receptor family. Type 5 subfamily. Interacts with IL4RA. Interacts with high affinity to interleukin-13 (IL13), but not to interleukin-4 (IL4). Post-translationally, cleaved by MMP8 leading to a soluble form that is also able to interact with IL13.

The protein resides in the cell membrane. Its function is as follows. Cell surface receptor that plays a role in the regulation of IL-13-mediated responses. Functions as a decoy receptor that inhibits IL-13- and IL-4-mediated signal transduction via the JAK-STAT pathway and thereby modulates immune responses and inflammation. Serves as a functional signaling receptor for IL-13 in an alternative pathway involving AP-1 ultimately leading to the production of TGFB1. The polypeptide is Interleukin-13 receptor subunit alpha-2 (Il13ra2) (Rattus norvegicus (Rat)).